The sequence spans 294 residues: Undecaprenyl-diphosphatase (294 aa).

The next 6 helical transmembrane spans lie at 39-59 (PGAAFTAIIQIGTELAVILYF), 93-113 (TQMGWFIIIGTLPILIAGLLF), 123-143 (NLWITVTVLIIFGILLWVVDA), 197-217 (VSFLMAIPAVFGAGILEAVSA), 234-254 (ATIAATIVAFVVGYVVIIGFL), and 265-285 (FAIYRIALAVVVALLLICGVL).

Belongs to the UppP family.

The protein resides in the cell membrane. The catalysed reaction is di-trans,octa-cis-undecaprenyl diphosphate + H2O = di-trans,octa-cis-undecaprenyl phosphate + phosphate + H(+). Its function is as follows. Catalyzes the dephosphorylation of undecaprenyl diphosphate (UPP). Confers resistance to bacitracin. The protein is Undecaprenyl-diphosphatase of Bifidobacterium adolescentis (strain ATCC 15703 / DSM 20083 / NCTC 11814 / E194a).